Reading from the N-terminus, the 364-residue chain is MQELKRTPLYNIHLAAGAKMVEFGGWLMPVQYEGIIAEHQAVRSAAGLFDVSHMGEIQISGPTAREFVQRLVTNDISRLKPGCAIYSPMCNPQGGTVDDLLVYQLEDQQYLLVVNASNTDKDFHWIVSQQVPGVEIQNVSEVTCQLALQGPQAEKILQRLTAVDLSHIKSFCFVYGAVEGIHCLISRTGYTGEAGFELYFPASHAERVWQAIMATGATDGLRPVGLGARDTLRFEACLALYGHELTDDISPLMAGLGWTVKFNKPEFVGKEPLLKQKEAGTTYQLVGLEMIDRGIPRQGYAIFKEGQEVGWITSGTFAPTLGKNMGLGYVEIPFADVGKELNIMVRNKPLKARIVKKPFYKREV.

Belongs to the GcvT family. The glycine cleavage system is composed of four proteins: P, T, L and H.

The enzyme catalyses N(6)-[(R)-S(8)-aminomethyldihydrolipoyl]-L-lysyl-[protein] + (6S)-5,6,7,8-tetrahydrofolate = N(6)-[(R)-dihydrolipoyl]-L-lysyl-[protein] + (6R)-5,10-methylene-5,6,7,8-tetrahydrofolate + NH4(+). The glycine cleavage system catalyzes the degradation of glycine. The sequence is that of Aminomethyltransferase from Desulforamulus reducens (strain ATCC BAA-1160 / DSM 100696 / MI-1) (Desulfotomaculum reducens).